Reading from the N-terminus, the 490-residue chain is Glutamyl-tRNA(Gln) amidotransferase subunit A (490 aa).

Active-site charge relay system residues include K80 and S155. Catalysis depends on S179, which acts as the Acyl-ester intermediate.

The protein belongs to the amidase family. GatA subfamily. As to quaternary structure, heterotrimer of A, B and C subunits.

It carries out the reaction L-glutamyl-tRNA(Gln) + L-glutamine + ATP + H2O = L-glutaminyl-tRNA(Gln) + L-glutamate + ADP + phosphate + H(+). In terms of biological role, allows the formation of correctly charged Gln-tRNA(Gln) through the transamidation of misacylated Glu-tRNA(Gln) in organisms which lack glutaminyl-tRNA synthetase. The reaction takes place in the presence of glutamine and ATP through an activated gamma-phospho-Glu-tRNA(Gln). In Brevibacillus brevis (strain 47 / JCM 6285 / NBRC 100599), this protein is Glutamyl-tRNA(Gln) amidotransferase subunit A.